Reading from the N-terminus, the 269-residue chain is MKTPVELAISGMQTLHVQHRGRSGYRVKVRPSYVDETLFGSPAGTRPVPPDFDPPWMKKANRSRGVGTGVSQALGANGSCESTSSSGSTPTLTPRKKNKYRLISHTPSYCDESLFGSRQEGAGWEAKWMARGDAAKLHALFWTPPATPRGSHSPRPRETPVRCVHPADLSKTEHRVMASSRRLSVDGLDTPRPLRRERSHSLTHPNVPSTGHTPASSPCTSGPRDPRPAPSGVTFRSPLVTPRAGSVSVSVPTTPRQGGATQKTKPPWK.

Residues valine 5–valine 17 carry the Nuclear export signal motif. Disordered stretches follow at residues glycine 67 to proline 94 and proline 145 to lysine 269. Low complexity predominate over residues serine 79 to threonine 93. The short motif at leucine 92–serine 108 is the Nuclear localization signal element. The tract at residues tryptophan 128–proline 156 is interaction with RBPJ/RBPSUH. The interval proline 156–lysine 269 is interaction with tubulin. 2 stretches are compositionally biased toward polar residues: residues leucine 202 to threonine 220 and valine 247 to lysine 269.

This sequence belongs to the RITA family. In terms of assembly, interacts with RBPJ/RBPSUH.

The protein localises to the cytoplasm. Its subcellular location is the nucleus. The protein resides in the cytoskeleton. It localises to the microtubule organizing center. It is found in the centrosome. Its function is as follows. Tubulin-binding protein that acts as a negative regulator of Notch signaling pathway. Shuttles between the cytoplasm and the nucleus and mediates the nuclear export of RBPJ/RBPSUH, thereby preventing the interaction between RBPJ/RBPSUH and NICD product of Notch proteins (Notch intracellular domain), leading to down-regulate Notch-mediated transcription. May play a role in neurogenesis. The sequence is that of RBPJ-interacting and tubulin-associated protein 1 (RITA1) from Bos taurus (Bovine).